A 189-amino-acid polypeptide reads, in one-letter code: Glycerol-3-phosphate acyltransferase (189 aa).

Transmembrane regions (helical) follow at residues 1-21, 50-70, 72-92, 111-131, and 151-171; these read MVWL…AVLL, KLAI…VLVA, WLGL…IGHL, MLLG…LLTF, and LLAW…ALIV.

It belongs to the PlsY family. In terms of assembly, probably interacts with PlsX.

It localises to the cell inner membrane. The enzyme catalyses an acyl phosphate + sn-glycerol 3-phosphate = a 1-acyl-sn-glycero-3-phosphate + phosphate. Its pathway is lipid metabolism; phospholipid metabolism. Catalyzes the transfer of an acyl group from acyl-phosphate (acyl-PO(4)) to glycerol-3-phosphate (G3P) to form lysophosphatidic acid (LPA). This enzyme utilizes acyl-phosphate as fatty acyl donor, but not acyl-CoA or acyl-ACP. The protein is Glycerol-3-phosphate acyltransferase of Pseudomonas paraeruginosa (strain DSM 24068 / PA7) (Pseudomonas aeruginosa (strain PA7)).